The primary structure comprises 233 residues: Transmembrane protein 40 (233 aa).

At methionine 1 the chain carries N-acetylmethionine. Residues 1–14 are compositionally biased toward polar residues; the sequence is METSASSSQPQDNS. The tract at residues 1 to 143 is disordered; that stretch reads METSASSSQP…RRGSDPASGE (143 aa). The segment covering 50 to 70 has biased composition (low complexity); sequence SSSSSSSSSSSSSSSSSSSSS. Residues 93–104 show a composition bias toward gly residues; sequence YPHGNGSPGPGH. A compositionally biased stretch (basic and acidic residues) spans 105–114; sequence GEPDVLKDEL. Phosphoserine is present on serine 137. Helical transmembrane passes span 160–180 and 187–207; these read FFHF…YHYY and LGVG…FGLV.

The protein localises to the membrane. In Homo sapiens (Human), this protein is Transmembrane protein 40 (TMEM40).